The primary structure comprises 445 residues: 3-phosphoshikimate 1-carboxyvinyltransferase (445 aa).

A disordered region spans residues 1 to 25 (MTDSNQPMPLQARKSGALHGTARVP). K28, S29, and R33 together coordinate 3-phosphoshikimate. Position 28 (K28) interacts with phosphoenolpyruvate. 2 residues coordinate phosphoenolpyruvate: G101 and R129. S175, Q177, D328, and K355 together coordinate 3-phosphoshikimate. Q177 is a binding site for phosphoenolpyruvate. D328 functions as the Proton acceptor in the catalytic mechanism. Phosphoenolpyruvate is bound by residues R359 and R402.

The protein belongs to the EPSP synthase family. Monomer.

The protein resides in the cytoplasm. It carries out the reaction 3-phosphoshikimate + phosphoenolpyruvate = 5-O-(1-carboxyvinyl)-3-phosphoshikimate + phosphate. Its pathway is metabolic intermediate biosynthesis; chorismate biosynthesis; chorismate from D-erythrose 4-phosphate and phosphoenolpyruvate: step 6/7. Functionally, catalyzes the transfer of the enolpyruvyl moiety of phosphoenolpyruvate (PEP) to the 5-hydroxyl of shikimate-3-phosphate (S3P) to produce enolpyruvyl shikimate-3-phosphate and inorganic phosphate. The polypeptide is 3-phosphoshikimate 1-carboxyvinyltransferase (Rhodopseudomonas palustris (strain ATCC BAA-98 / CGA009)).